We begin with the raw amino-acid sequence, 138 residues long: Large ribosomal subunit protein bL17 (138 aa).

Belongs to the bacterial ribosomal protein bL17 family. Part of the 50S ribosomal subunit. Contacts protein L32.

This is Large ribosomal subunit protein bL17 from Phenylobacterium zucineum (strain HLK1).